The primary structure comprises 261 residues: Short-chain dehydrogenase/reductase AFUA_1G00990 (261 aa).

Positions 19, 67, 94, 169, 173, and 213 each coordinate NADP(+). Tyr169 serves as the catalytic Proton donor. The active-site Lowers pKa of active site Tyr is the Lys173.

It belongs to the short-chain dehydrogenases/reductases (SDR) family.

Functionally, short-chain dehydrogenase/reductase; part of the gene cluster that mediates the biosynthesis of fumigermin that inhibits germination of spores of the inducing S.rapamycinicus, and thus helps the fungus to defend resources in the shared habitat against a bacterial competitor. The partially reducing polyketide synthase fngA alone is sufficient for the production of fumigermin. FgnA catalyzes the condensation of 3 malonyl-CoA units to an acetyl-CoA starter, and 3 methylations to yield fumigermin. It is remarkable that the five cluster genes including fgnA are conserved in distantly related fungi, supporting the assumption of a fumigermin cluster; it is thus possible that originally all five genes were functional, but that the genes encoding tailoring enzymes became inactive from mutations, similar to the case of the fgnA gene in strains A1163 and Af293. The protein is Short-chain dehydrogenase/reductase AFUA_1G00990 of Aspergillus fumigatus (strain ATCC MYA-4609 / CBS 101355 / FGSC A1100 / Af293) (Neosartorya fumigata).